The sequence spans 260 residues: ProSAAS (260 aa).

The first 33 residues, 1-33, serve as a signal peptide directing secretion; sequence MAGSPLLWGPRAGGVGLLVLLLLGLFRPPPALC. The interval 34–215 is proSAAS(1-180); that stretch reads ARPVKEPRGL…SADSEGVAAP (182 aa). O-linked (GalNAc...) threonine glycosylation occurs at threonine 53. The segment at 165 to 188 is disordered; sequence RPRPPVYDDGPAGPDAEEAGDETP. Residues 179 to 188 show a composition bias toward acidic residues; that stretch reads DAEEAGDETP. Residues 221 to 260 form a C-terminal inhibitory domain; interacts with PCSK1 region; sequence AADHDVGSELPPEGVLGALLRVKRLETPAPQVPARRLLPP. Residue serine 228 is glycosylated (O-linked (GalNAc...) serine). The short motif at 239-244 is the Sufficient for inhibition of PCSK1 element; it reads LLRVKR. O-linked (GalNAc...) threonine glycosylation is present at threonine 247.

As to quaternary structure, interacts via the C-terminal inhibitory domain with PCSK1 66 kDa form. Post-translationally, proteolytically cleaved in the Golgi. In terms of processing, O-glycosylated with a core 1 or possibly core 8 glycan. In terms of tissue distribution, expressed in brain and pancreas.

The protein localises to the secreted. It localises to the golgi apparatus. The protein resides in the trans-Golgi network. May function in the control of the neuroendocrine secretory pathway. Proposed be a specific endogenous inhibitor of PCSK1. ProSAAS and Big PEN-LEN, both containing the C-terminal inhibitory domain, but not the further processed peptides reduce PCSK1 activity in the endoplasmic reticulum and Golgi. It reduces the activity of the 84 kDa form but not the autocatalytically derived 66 kDa form of PCSK1. Subsequent processing of proSAAS may eliminate the inhibition. Slows down convertase-mediated processing of proopiomelanocortin and proenkephalin. May control the intracellular timing of PCSK1 rather than its total level of activity. Its function is as follows. Endogenous ligand for GPR171. Neuropeptide involved in the regulation of feeding. In Homo sapiens (Human), this protein is ProSAAS (PCSK1N).